We begin with the raw amino-acid sequence, 863 residues long: DNA gyrase subunit A (863 aa).

In terms of domain architecture, Topo IIA-type catalytic spans 37–500 (LPDARDGLKP…DYDDIDIEDL (464 aa)). The O-(5'-phospho-DNA)-tyrosine intermediate role is filled by Tyr125. The short motif at 527–533 (QKRGGKG) is the GyrA-box element.

The protein belongs to the type II topoisomerase GyrA/ParC subunit family. In terms of assembly, heterotetramer, composed of two GyrA and two GyrB chains. In the heterotetramer, GyrA contains the active site tyrosine that forms a transient covalent intermediate with DNA, while GyrB binds cofactors and catalyzes ATP hydrolysis.

It localises to the cytoplasm. It carries out the reaction ATP-dependent breakage, passage and rejoining of double-stranded DNA.. In terms of biological role, a type II topoisomerase that negatively supercoils closed circular double-stranded (ds) DNA in an ATP-dependent manner to modulate DNA topology and maintain chromosomes in an underwound state. Negative supercoiling favors strand separation, and DNA replication, transcription, recombination and repair, all of which involve strand separation. Also able to catalyze the interconversion of other topological isomers of dsDNA rings, including catenanes and knotted rings. Type II topoisomerases break and join 2 DNA strands simultaneously in an ATP-dependent manner. The protein is DNA gyrase subunit A of Campylobacter jejuni subsp. jejuni serotype O:2 (strain ATCC 700819 / NCTC 11168).